The sequence spans 134 residues: MAYSSCLNRSLKPNKLLLRRIDGAIQVRSHVDRTFYSLVGSGRSGGGPPRLLSSRESIHPLSVYGELSLEHRLRFVLNGKMEHLTTHLHRPRTTRSPLSFWGDGGIVPFEPFFHAFPGGLEKAVINRTSLILPS.

Belongs to the ycf68 family.

The protein resides in the plastid. It localises to the chloroplast. This is an uncharacterized protein from Saccharum hybrid (Sugarcane).